We begin with the raw amino-acid sequence, 360 residues long: Peptide chain release factor 1 (360 aa).

Gln235 is subject to N5-methylglutamine. Residues 285 to 313 form a disordered region; it reads KRQQAEASTRRNLLGSGDRSDRNRTYNFP.

This sequence belongs to the prokaryotic/mitochondrial release factor family. In terms of processing, methylated by PrmC. Methylation increases the termination efficiency of RF1.

The protein localises to the cytoplasm. Functionally, peptide chain release factor 1 directs the termination of translation in response to the peptide chain termination codons UAG and UAA. The sequence is that of Peptide chain release factor 1 from Shigella boydii serotype 18 (strain CDC 3083-94 / BS512).